We begin with the raw amino-acid sequence, 145 residues long: Ribosome maturation factor RimP (145 aa).

Belongs to the RimP family.

The protein localises to the cytoplasm. In terms of biological role, required for maturation of 30S ribosomal subunits. The polypeptide is Ribosome maturation factor RimP (Borreliella burgdorferi (strain ATCC 35210 / DSM 4680 / CIP 102532 / B31) (Borrelia burgdorferi)).